Consider the following 232-residue polypeptide: Large ribosomal subunit protein uL1 (232 aa).

Belongs to the universal ribosomal protein uL1 family. As to quaternary structure, part of the 50S ribosomal subunit.

Functionally, binds directly to 23S rRNA. The L1 stalk is quite mobile in the ribosome, and is involved in E site tRNA release. In terms of biological role, protein L1 is also a translational repressor protein, it controls the translation of the L11 operon by binding to its mRNA. The protein is Large ribosomal subunit protein uL1 of Bacillus cereus (strain ATCC 14579 / DSM 31 / CCUG 7414 / JCM 2152 / NBRC 15305 / NCIMB 9373 / NCTC 2599 / NRRL B-3711).